The following is a 200-amino-acid chain: LexA repressor (200 aa).

The segment at residues 29–48 (IRDIARAFRITPRGAIVHLN) is a DNA-binding region (H-T-H motif). Catalysis depends on for autocatalytic cleavage activity residues Ser120 and Lys158.

This sequence belongs to the peptidase S24 family. Homodimer.

It carries out the reaction Hydrolysis of Ala-|-Gly bond in repressor LexA.. Represses a number of genes involved in the response to DNA damage (SOS response), including recA and lexA. In the presence of single-stranded DNA, RecA interacts with LexA causing an autocatalytic cleavage which disrupts the DNA-binding part of LexA, leading to derepression of the SOS regulon and eventually DNA repair. This Pseudothermotoga lettingae (strain ATCC BAA-301 / DSM 14385 / NBRC 107922 / TMO) (Thermotoga lettingae) protein is LexA repressor.